The chain runs to 231 residues: Ribonuclease HII (231 aa).

Positions 32–223 (WPVAGMDEAG…FRLGGTEVVE (192 aa)) constitute an RNase H type-2 domain. Positions 38, 39, and 130 each coordinate a divalent metal cation.

This sequence belongs to the RNase HII family. Requires Mn(2+) as cofactor. Mg(2+) is required as a cofactor.

It localises to the cytoplasm. It carries out the reaction Endonucleolytic cleavage to 5'-phosphomonoester.. Functionally, endonuclease that specifically degrades the RNA of RNA-DNA hybrids. The polypeptide is Ribonuclease HII (Mesorhizobium japonicum (strain LMG 29417 / CECT 9101 / MAFF 303099) (Mesorhizobium loti (strain MAFF 303099))).